Reading from the N-terminus, the 191-residue chain is MIPFTNFESRLIKLPINNVDTDQIIPARFLKTTSKVGLDKQLFNDWRQDPDFVLNRPESQGLQILLAGDNFGCGSSREHAPWALTQWGFRAVISTSFADIFKQNSLKNSLLPIEVPADVHAELFSSDGPAKIDLPNQTLTTPSGREVHFEVDQFSKHCLVKGVDELGYILEQAPEIAAYEASHPAPINALA.

Belongs to the LeuD family. LeuD type 1 subfamily. In terms of assembly, heterodimer of LeuC and LeuD.

The enzyme catalyses (2R,3S)-3-isopropylmalate = (2S)-2-isopropylmalate. It participates in amino-acid biosynthesis; L-leucine biosynthesis; L-leucine from 3-methyl-2-oxobutanoate: step 2/4. In terms of biological role, catalyzes the isomerization between 2-isopropylmalate and 3-isopropylmalate, via the formation of 2-isopropylmaleate. The protein is 3-isopropylmalate dehydratase small subunit of Solibacter usitatus (strain Ellin6076).